We begin with the raw amino-acid sequence, 157 residues long: 6,7-dimethyl-8-ribityllumazine synthase 1 (157 aa).

5-amino-6-(D-ribitylamino)uracil contacts are provided by residues Phe22, 53–55 (ALE), and 82–84 (TVI). 87-88 (ET) is a binding site for (2S)-2-hydroxy-3-oxobutyl phosphate. His90 functions as the Proton donor in the catalytic mechanism. Asn115 lines the 5-amino-6-(D-ribitylamino)uracil pocket. His129 contributes to the (2S)-2-hydroxy-3-oxobutyl phosphate binding site.

It belongs to the DMRL synthase family. In terms of assembly, homopentamer.

It catalyses the reaction (2S)-2-hydroxy-3-oxobutyl phosphate + 5-amino-6-(D-ribitylamino)uracil = 6,7-dimethyl-8-(1-D-ribityl)lumazine + phosphate + 2 H2O + H(+). It participates in cofactor biosynthesis; riboflavin biosynthesis; riboflavin from 2-hydroxy-3-oxobutyl phosphate and 5-amino-6-(D-ribitylamino)uracil: step 1/2. In terms of biological role, catalyzes the formation of 6,7-dimethyl-8-ribityllumazine by condensation of 5-amino-6-(D-ribitylamino)uracil with 3,4-dihydroxy-2-butanone 4-phosphate. This is the penultimate step in the biosynthesis of riboflavin. The polypeptide is 6,7-dimethyl-8-ribityllumazine synthase 1 (ribH1) (Brucella abortus (strain 2308)).